The primary structure comprises 542 residues: Chaperonin GroEL (542 aa).

ATP-binding positions include 29 to 32, 86 to 90, Gly-414, and Asp-491; these read TLGP and DGTTT.

This sequence belongs to the chaperonin (HSP60) family. Forms a cylinder of 14 subunits composed of two heptameric rings stacked back-to-back. Interacts with the co-chaperonin GroES.

The protein localises to the cytoplasm. The catalysed reaction is ATP + H2O + a folded polypeptide = ADP + phosphate + an unfolded polypeptide.. Its function is as follows. Together with its co-chaperonin GroES, plays an essential role in assisting protein folding. The GroEL-GroES system forms a nano-cage that allows encapsulation of the non-native substrate proteins and provides a physical environment optimized to promote and accelerate protein folding. In Desulforamulus reducens (strain ATCC BAA-1160 / DSM 100696 / MI-1) (Desulfotomaculum reducens), this protein is Chaperonin GroEL.